Reading from the N-terminus, the 83-residue chain is RNA-binding protein Hfq (83 aa).

Residues 9–68 (DPYLNALRKERIPVSIFLVNGIKLQGQIESFDQFVILLKNTVSQMVYKHAISTVVPARNV) form the Sm domain.

The protein belongs to the Hfq family. Homohexamer.

In terms of biological role, RNA chaperone that binds small regulatory RNA (sRNAs) and mRNAs to facilitate mRNA translational regulation in response to envelope stress, environmental stress and changes in metabolite concentrations. Also binds with high specificity to tRNAs. In Marinobacter nauticus (strain ATCC 700491 / DSM 11845 / VT8) (Marinobacter aquaeolei), this protein is RNA-binding protein Hfq.